A 104-amino-acid chain; its full sequence is Chemokine-like protein MC148 (104 aa).

In terms of assembly, interacts with host CXCL12.

In terms of biological role, plays a role in antagonizing the chemotaxis of multiple leukocyte subsets induced by CC and CXC chemokines. Displaces the interaction between CXCL12 and CXCR4 and thereby inactivates the antiviral activity of host CXCL12. This Homo sapiens (Human) protein is Chemokine-like protein MC148 (MC148).